The following is a 642-amino-acid chain: MNKYEVIVVGAGHAGCEAALAAARMGCRTLVLSICLDTVAHMPCSPSVGGVGKGHLVREIDALGGRMALITDRTAIQFRLLNTKKGPAVWGTRTQNDKARYRISMKHCLESEPNLDLKQAHVESLAVEGNRIVGVIDQLGVFFGADAVVLATGTFLRGLVHIGTTSVEAGRAGELASYPLANQLQRLGFTLGRMKTGTPARLGRRSIDFSRFREQHGDEAPKPFSLFTDSIALPQVSCFIGKTHQRTHELVRRHIHLSPLYNGTIRGVSARYCPSLEDKVMRFPDKDFHQIILEPEGLDTEEVYASGTGNSLPYDIQLRLIHSVPGLEEAEVMRPAYAIEYDFVQPTQLKATLGSKLVEGLYMAGQINGTSGYEEAAGQGLWAGINAALKAQGRPPFILDRSEAYLAVMVDDLVTRGTNEPYRIFTSRAEYRLLLREDNADLRLLEKGCELGLHSADAAKELRERRGAIRNELERLRLTHVRPSAQVNQTLAENHSPPLDAPAPLDKLLKRPELNYSTVAILSPPPEPLSSKVTEQVEVECKYEGYLKRQEAEVAKFRQLEQAAIPEDLMYDDIPGLSNELRQKLGAVRPLSLGQATRIPGMTPAAVSVLMVHLRRRAQGGPFLAPVLDPGVNMHSQKKKLA.

FAD is bound by residues 10-15, V122, and S177; that span reads GAGHAG. 269 to 283 contributes to the NAD(+) binding site; sequence SARYCPSLEDKVMRF. Residue Q366 coordinates FAD.

Belongs to the MnmG family. Homodimer. Heterotetramer of two MnmE and two MnmG subunits. Requires FAD as cofactor.

Its subcellular location is the cytoplasm. In terms of biological role, NAD-binding protein involved in the addition of a carboxymethylaminomethyl (cmnm) group at the wobble position (U34) of certain tRNAs, forming tRNA-cmnm(5)s(2)U34. The protein is tRNA uridine 5-carboxymethylaminomethyl modification enzyme MnmG of Syntrophobacter fumaroxidans (strain DSM 10017 / MPOB).